A 212-amino-acid chain; its full sequence is Thymidylate kinase (212 aa).

10 to 17 (GPDGSGKS) provides a ligand contact to ATP.

It belongs to the thymidylate kinase family.

The enzyme catalyses dTMP + ATP = dTDP + ADP. Phosphorylation of dTMP to form dTDP in both de novo and salvage pathways of dTTP synthesis. The protein is Thymidylate kinase of Exiguobacterium sp. (strain ATCC BAA-1283 / AT1b).